Reading from the N-terminus, the 420-residue chain is Methanogen homoaconitase large subunit (420 aa).

Positions 302, 362, and 365 each coordinate [4Fe-4S] cluster.

This sequence belongs to the aconitase/IPM isomerase family. LeuC type 2 subfamily. As to quaternary structure, heterotetramer of 2 HacA and 2 HacB proteins. The cofactor is [4Fe-4S] cluster.

It catalyses the reaction (2R)-homocitrate = (2R,3S)-homoisocitrate. The enzyme catalyses (2R)-homocitrate = cis-homoaconitate + H2O. The catalysed reaction is (2R,3S)-homoisocitrate = cis-homoaconitate + H2O. It carries out the reaction cis-(homo)2aconitate + H2O = (2R,3S)-iso(homo)2citrate. It catalyses the reaction cis-(homo)3aconitate + H2O = (2R,3S)-iso(homo)3citrate. The enzyme catalyses (R)-malate = maleate + H2O. The catalysed reaction is cis-aconitate + H2O = D-threo-isocitrate. It functions in the pathway organic acid metabolism; 2-oxosuberate biosynthesis. Its function is as follows. Component of a hydro-lyase with broad substrate specificity for cis-unsaturated tricarboxylic acids. Catalyzes both the reversible dehydration of (R)-homocitrate ((R)-2-hydroxybutane-1,2,4-tricarboxylate) to produce cis-homoaconitate ((Z)-but-1-ene-1,2,4-tricarboxylate), and its hydration to homoisocitrate ((1R,2S)-1-hydroxybutane-1,2,4-tricarboxylate). Is also able to hydrate the analogous longer chain substrates cis-homo(2)-aconitate, cis-homo(3)-aconitate, and even the non-physiological cis-homo(4)-aconitate with similar efficiency. These reactions are part of the biosynthesis pathway of coenzyme B. Can also catalyze the hydration of maleate to (R)-malate, and that of cis-aconitate. Cannot catalyze the hydration of citraconate and the dehydration of (S)-homocitrate, citramalate, 2-isopropylmalate, 3-isopropylmalate, citrate or threo-DL-isocitrate. This Methanocaldococcus jannaschii (strain ATCC 43067 / DSM 2661 / JAL-1 / JCM 10045 / NBRC 100440) (Methanococcus jannaschii) protein is Methanogen homoaconitase large subunit (hacA).